The following is a 284-amino-acid chain: Nucleotide-binding protein Shewmr7_3352 (284 aa).

Gly-8 to Ser-15 serves as a coordination point for ATP. Asp-56–Asn-59 lines the GTP pocket.

It belongs to the RapZ-like family.

Displays ATPase and GTPase activities. This chain is Nucleotide-binding protein Shewmr7_3352, found in Shewanella sp. (strain MR-7).